A 311-amino-acid chain; its full sequence is Probable cysteine synthase (311 aa).

At Lys-45 the chain carries N6-(pyridoxal phosphate)lysine. Pyridoxal 5'-phosphate contacts are provided by residues Asn-75, 182–186 (GTGGT), and Ser-270.

The protein belongs to the cysteine synthase/cystathionine beta-synthase family. Pyridoxal 5'-phosphate is required as a cofactor.

The catalysed reaction is O-acetyl-L-serine + hydrogen sulfide = L-cysteine + acetate. It functions in the pathway amino-acid biosynthesis; L-cysteine biosynthesis; L-cysteine from L-serine: step 2/2. This Bacillus subtilis (strain 168) protein is Probable cysteine synthase (ytkP).